The following is a 336-amino-acid chain: Mitochondrial thiamine diphosphate carrier 2 (336 aa).

6 consecutive transmembrane segments (helical) span residues 11 to 27, 88 to 105, 127 to 150, 182 to 199, 230 to 246, and 303 to 322; these read RRALVDSLAGAISGGIS, VPALLMYMPYTAIQFTVL, YLSYVSGALAGCAATIGSYPFDLL, LYSGLSPTLVEIIPYAGL, SVSSFQLFLCGFAAGTF, and GLFPSLVKSAPAGAVTFVAY. Solcar repeat units lie at residues 11–111, 124–210, and 231–328; these read RRAL…LKTF, LSPY…FKRS, and VSSF…ISDW.

Belongs to the mitochondrial carrier (TC 2.A.29) family. As to expression, ubiquitous.

It is found in the mitochondrion inner membrane. Functionally, mitochondrial transporter that mediates uptake of thiamine diphosphate (ThDP) into mitochondria. This Zea mays (Maize) protein is Mitochondrial thiamine diphosphate carrier 2.